A 547-amino-acid polypeptide reads, in one-letter code: Putative cysteine ligase BshC (547 aa).

Residues 462–484 adopt a coiled-coil conformation; it reads NLAEENLDRVIAQARFLRQKVEH.

The protein belongs to the BshC family.

In terms of biological role, involved in bacillithiol (BSH) biosynthesis. May catalyze the last step of the pathway, the addition of cysteine to glucosamine malate (GlcN-Mal) to generate BSH. In Heliobacterium modesticaldum (strain ATCC 51547 / Ice1), this protein is Putative cysteine ligase BshC.